A 407-amino-acid polypeptide reads, in one-letter code: Imidazolonepropionase (407 aa).

The Fe(3+) site is built by histidine 74 and histidine 76. Residues histidine 74 and histidine 76 each coordinate Zn(2+). 3 residues coordinate 4-imidazolone-5-propanoate: arginine 83, tyrosine 146, and histidine 179. Residue tyrosine 146 coordinates N-formimidoyl-L-glutamate. Histidine 244 is a binding site for Fe(3+). Position 244 (histidine 244) interacts with Zn(2+). Glutamine 247 contributes to the 4-imidazolone-5-propanoate binding site. Position 319 (aspartate 319) interacts with Fe(3+). Residue aspartate 319 participates in Zn(2+) binding. N-formimidoyl-L-glutamate-binding residues include asparagine 321 and glycine 323. Position 324 (threonine 324) interacts with 4-imidazolone-5-propanoate.

The protein belongs to the metallo-dependent hydrolases superfamily. HutI family. Zn(2+) serves as cofactor. Requires Fe(3+) as cofactor.

It is found in the cytoplasm. It carries out the reaction 4-imidazolone-5-propanoate + H2O = N-formimidoyl-L-glutamate. Its pathway is amino-acid degradation; L-histidine degradation into L-glutamate; N-formimidoyl-L-glutamate from L-histidine: step 3/3. In terms of biological role, catalyzes the hydrolytic cleavage of the carbon-nitrogen bond in imidazolone-5-propanoate to yield N-formimidoyl-L-glutamate. It is the third step in the universal histidine degradation pathway. The polypeptide is Imidazolonepropionase (Salmonella heidelberg (strain SL476)).